Consider the following 68-residue polypeptide: Large ribosomal subunit protein eL24 (68 aa).

Residues Cys7, Cys10, Cys33, and Cys37 each coordinate Zn(2+). A C4-type zinc finger spans residues 7-37 (CSYCGREFEPGTGKMFVRNDGRVLFFCSSKC).

This sequence belongs to the eukaryotic ribosomal protein eL24 family. In terms of assembly, part of the 50S ribosomal subunit. Forms a cluster with proteins L3 and L14. Requires Zn(2+) as cofactor.

In terms of biological role, binds to the 23S rRNA. This is Large ribosomal subunit protein eL24 from Thermococcus onnurineus (strain NA1).